We begin with the raw amino-acid sequence, 264 residues long: ATP synthase subunit a (264 aa).

The next 6 membrane-spanning stretches (helical) occupy residues 29 to 49 (TWHI…LWIF), 87 to 107 (NALI…MNFM), 134 to 154 (DLNI…YYSI), 177 to 197 (IPVN…SLAL), 208 to 228 (LIFI…SLGV), and 235 to 255 (LIFH…LTIV).

It belongs to the ATPase A chain family. F-type ATPases have 2 components, CF(1) - the catalytic core - and CF(0) - the membrane proton channel. CF(1) has five subunits: alpha(3), beta(3), gamma(1), delta(1), epsilon(1). CF(0) has three main subunits: a(1), b(2) and c(9-12). The alpha and beta chains form an alternating ring which encloses part of the gamma chain. CF(1) is attached to CF(0) by a central stalk formed by the gamma and epsilon chains, while a peripheral stalk is formed by the delta and b chains.

It localises to the cell inner membrane. Functionally, key component of the proton channel; it plays a direct role in the translocation of protons across the membrane. This is ATP synthase subunit a from Shewanella amazonensis (strain ATCC BAA-1098 / SB2B).